Here is a 640-residue protein sequence, read N- to C-terminus: Protein argonaute (640 aa).

Residues 1–100 form an N-terminal domain region; that stretch reads MYLNLYEIKI…YIKKKFIDNN (100 aa). The interval 101–153 is linker L1; it reads FYYKRGNNYISINDKFPLDSNTNVNAHLTYKIKLYKINERYYISVLPKFTFLS. The PAZ domain stretch occupies residues 154–209; that stretch reads DKPALESPIKSTYLFNIKSGKTFPYISGLNGVLKIDLGENGIKEVLFPENYYFNFT. The linker L2 stretch occupies residues 210 to 291; that stretch reads SKEAEKFGFS…KYSFYKNDQK (82 aa). Residues 292-423 are mid domain; the sequence is IKIAFFFSSK…YVYKMGNFIP (132 aa). The PIWI domain stretch occupies residues 424 to 640; that stretch reads ECQPYVIRNL…EWKLYIPYMK (217 aa). Active-site residues include Asp445, Glu481, Asp515, and Asn623. Asp445 is a binding site for Mn(2+). Positions 515 and 623 each coordinate Mn(2+).

It belongs to the argonaute family. Long pAgo subfamily. Mn(2+) serves as cofactor.

A highly versatile argonaute that uses 5'-phospho- and 5'-OH- guide RNA (gRNA) or DNA (gDNA) to cleave target RNA or ssDNA (tDNA) in all possible combinations; has no detectable activity in the absence of guide. Uses short guide sequences (18-21 nucleotides (nt) on average) to bind complementary target nucleic acids resulting in target cleavage in a site-specific manner. Using 5'-phospho-gRNA or 5'-OH-gRNA the cleavage site is 10 nt downstream of the target residue base-paired with the 5'-end of the gRNA, using 5'-phospho-gDNA the cleavage site is 11 nucleotides (nt) downstream, while with 5'-OH-gDNA the cleavage site is 9 nt downstream. This chain is Protein argonaute, found in Marinitoga hydrogenitolerans (strain DSM 16785 / JCM 12826 / AT1271).